A 216-amino-acid chain; its full sequence is Protein Syd (216 aa).

Belongs to the Syd family.

It localises to the cell inner membrane. In terms of biological role, interacts with the SecY protein in vivo. May bind preferentially to an uncomplexed state of SecY, thus functioning either as a chelating agent for excess SecY in the cell or as a regulatory factor that negatively controls the translocase function. The chain is Protein Syd from Shewanella baltica (strain OS185).